Consider the following 290-residue polypeptide: 4-hydroxybenzoate octaprenyltransferase (290 aa).

The next 6 helical transmembrane spans lie at 41-61 (WPLL…GCAM), 89-109 (WEAV…IQPL), 133-153 (FFAI…PMAF), 158-178 (DTVP…SVAY), 202-224 (FGRF…YVWI), and 269-289 (WLGG…GTAG).

This sequence belongs to the UbiA prenyltransferase family. Mg(2+) serves as cofactor.

The protein localises to the cell inner membrane. It carries out the reaction all-trans-octaprenyl diphosphate + 4-hydroxybenzoate = 4-hydroxy-3-(all-trans-octaprenyl)benzoate + diphosphate. It participates in cofactor biosynthesis; ubiquinone biosynthesis. Functionally, catalyzes the prenylation of para-hydroxybenzoate (PHB) with an all-trans polyprenyl group. Mediates the second step in the final reaction sequence of ubiquinone-8 (UQ-8) biosynthesis, which is the condensation of the polyisoprenoid side chain with PHB, generating the first membrane-bound Q intermediate 3-octaprenyl-4-hydroxybenzoate. This Burkholderia ambifaria (strain ATCC BAA-244 / DSM 16087 / CCUG 44356 / LMG 19182 / AMMD) (Burkholderia cepacia (strain AMMD)) protein is 4-hydroxybenzoate octaprenyltransferase.